The chain runs to 270 residues: uncharacterized protein (270 aa).

Positions 235–270 (LADSDLEADSDDSESFEFVENPEPSENGSEPTIKND) are disordered. Residues 238–251 (SDLEADSDDSESFE) show a composition bias toward acidic residues. Over residues 255 to 270 (NPEPSENGSEPTIKND) the composition is skewed to low complexity.

This is an uncharacterized protein from Halorubrum sp. PV6 (HRPV-1).